Consider the following 262-residue polypeptide: Cytochrome c oxidase subunit 3 (262 aa).

6 helical membrane-spanning segments follow: residues 39-59 (YTMTLFILGNIITILTMYQWW), 83-103 (GMILFIVSEIFFFISFFWAFF), 120-140 (VGIIAFNPFQIPLLNTAILLA), 163-183 (GLFFTIVLGIYFSILQAYEYI), 201-221 (ATGFHGLHVLIGTTFLLICFL), and 240-260 (AWYWHFVDVVWLFLYISIYWW).

Belongs to the cytochrome c oxidase subunit 3 family. As to quaternary structure, component of the cytochrome c oxidase (complex IV, CIV), a multisubunit enzyme composed of a catalytic core of 3 subunits and several supernumerary subunits. The complex exists as a monomer or a dimer and forms supercomplexes (SCs) in the inner mitochondrial membrane with ubiquinol-cytochrome c oxidoreductase (cytochrome b-c1 complex, complex III, CIII).

The protein resides in the mitochondrion inner membrane. The catalysed reaction is 4 Fe(II)-[cytochrome c] + O2 + 8 H(+)(in) = 4 Fe(III)-[cytochrome c] + 2 H2O + 4 H(+)(out). Component of the cytochrome c oxidase, the last enzyme in the mitochondrial electron transport chain which drives oxidative phosphorylation. The respiratory chain contains 3 multisubunit complexes succinate dehydrogenase (complex II, CII), ubiquinol-cytochrome c oxidoreductase (cytochrome b-c1 complex, complex III, CIII) and cytochrome c oxidase (complex IV, CIV), that cooperate to transfer electrons derived from NADH and succinate to molecular oxygen, creating an electrochemical gradient over the inner membrane that drives transmembrane transport and the ATP synthase. Cytochrome c oxidase is the component of the respiratory chain that catalyzes the reduction of oxygen to water. Electrons originating from reduced cytochrome c in the intermembrane space (IMS) are transferred via the dinuclear copper A center (CU(A)) of subunit 2 and heme A of subunit 1 to the active site in subunit 1, a binuclear center (BNC) formed by heme A3 and copper B (CU(B)). The BNC reduces molecular oxygen to 2 water molecules using 4 electrons from cytochrome c in the IMS and 4 protons from the mitochondrial matrix. The polypeptide is Cytochrome c oxidase subunit 3 (COIII) (Anopheles quadrimaculatus (Common malaria mosquito)).